The chain runs to 918 residues: Cell cycle and apoptosis regulator protein 2 (918 aa).

Residues 1–35 (MSQFKRQRINPLPGGRNFSGTASTSLLGPPPGLLT) form a disordered region. Position 35 is a phosphothreonine (threonine 35). Lysine 112 carries the post-translational modification N6-acetyllysine; by KAT8. Lysine 123 is modified (N6-methyllysine). Position 124 is a phosphoserine (serine 124). Disordered stretches follow at residues 179-219 (NRFP…KPRH), 446-510 (KAAE…PAVI), and 568-637 (VSPP…ASED). Residue arginine 180 is modified to Omega-N-methylarginine. Lysine 215 carries the N6-acetyllysine; by KAT8 modification. 2 stretches are compositionally biased toward low complexity: residues 447 to 468 (AAEA…EQAP) and 482 to 492 (AETPEATTQQE). A Phosphothreonine; by ATM, ATR and CK2 modification is found at threonine 454. Threonine 484 bears the Phosphothreonine mark. Serine 569 carries the post-translational modification Phosphoserine. Positions 572–597 (EPEKEEAAKEEEAIKEEVVKEPKDEA) are enriched in basic and acidic residues. Lysine 586 participates in a covalent cross-link: Glycyl lysine isopeptide (Lys-Gly) (interchain with G-Cter in SUMO2 and SUMO3); alternate. A Glycyl lysine isopeptide (Lys-Gly) (interchain with G-Cter in SUMO2); alternate cross-link involves residue lysine 586. Residues 605 to 665 (ESEAPLKEDG…EEFAGAKLED (61 aa)) are interaction with MCC. A phosphoserine mark is found at serine 622, serine 670, serine 673, serine 676, serine 682, and serine 803. Residues 699–918 (DCLLAFVFFD…VEKEEPAPSN (220 aa)) are interaction with NR1D1. The stretch at 824 to 904 (LENRIHTLEL…QLEIQRVVEK (81 aa)) forms a coiled coil. The residue at position 892 (threonine 892) is a Phosphothreonine.

As to quaternary structure, component of the DBIRD complex. Interacts with ZNF326/ZIRD; the interaction is direct. Interacts (via N-terminus) with SIRT1, which inhibits the deacetylation of substrates. Interacts (via N-terminus) with SUV39H1; this interaction abolishes the interaction with SIRT1. Component of a nuclear receptor-mediated transcription complex composed of at least ZNF335, CCAR2 and EMSY; the complex stimulates the transcription of nuclear receptor target genes such as SOX9 and HOXA1. Within the complex interacts with EMSY and interacts with ZNF335 (via C-terminus). Components of this complex may associate with components of a histone methylation complex to form a complex at least composed of ZNF335, HCFC1, CCAR2, EMSY, MKI67, RBBP5, ASH2L and WDR5. Within this complex, interacts with ASH2L. Interacts with NR1D1. Interacts (via N-terminus) with ESR1 and ESR2. Interacts (via N-terminus) with HDAC3 (via C-terminus). Interacts with HDAC1 and MED2F. Interacts with MCC. Interacts (via N-terminus) with NR1H2 and NR1H3 in a ligand-independent manner. Interacts with CSNK2A1. Interacts (via N-terminus) with p53/TP53. Interacts (via N-terminus) with BRCA1 (via the BRCT domains). Interacts (via N-terminus) with CHEK2 (via protein kinase domain). Interacts with PSEM3. Interacts (via N-terminus) with PSIA3 and SENP1. The sumoylated form shows a preferential interaction with SIRT1 as compared to its unmodified form. Interacts with CECR2; may form part of the CERF-1 and/or CEF-5 ISWI chromatin remodeling complexes in embryonic stem cells. Post-translationally, ATM/ATR-mediated phosphorylation at Thr-454 upon DNA damage promotes binding to SIRT1. Phosphorylation at Thr-454 promotes its sumoylation by switching the binding partner of CCAR2 from SENP1 to PIAS3. In terms of processing, acetylation at Lys-112 and Lys-215 by KAT8 prevents inhibitory binding to SIRT1 and increases its deacetylase activity. Genotoxic stress induces its sumoylation and sumoylation promotes the SIRT1-CCAR2 interaction which in turn inhibits SIRT1-mediated deacetylation of p53/TP53. Sumoylation leads to transcriptional activation of p53/TP53 by sequestering SIRT1 from p53/TP53. Desumoylated by SENP1.

It localises to the nucleus. Its subcellular location is the cytoplasm. The protein resides in the cytoskeleton. The protein localises to the spindle. Its function is as follows. Core component of the DBIRD complex, a multiprotein complex that acts at the interface between core mRNP particles and RNA polymerase II (RNAPII) and integrates transcript elongation with the regulation of alternative splicing: the DBIRD complex affects local transcript elongation rates and alternative splicing of a large set of exons embedded in (A + T)-rich DNA regions. Inhibits SIRT1 deacetylase activity leading to increasing levels of p53/TP53 acetylation and p53-mediated apoptosis. Inhibits SUV39H1 methyltransferase activity. Mediates ligand-dependent transcriptional activation by nuclear hormone receptors. Plays a critical role in maintaining genomic stability and cellular integrity following UV-induced genotoxic stress. Regulates the circadian expression of the core clock components NR1D1 and BMAL1. Enhances the transcriptional repressor activity of NR1D1 through stabilization of NR1D1 protein levels by preventing its ubiquitination and subsequent degradation. Represses the ligand-dependent transcriptional activation function of ESR2. Acts as a regulator of PCK1 expression and gluconeogenesis by a mechanism that involves, at least in part, both NR1D1 and SIRT1. Negatively regulates the deacetylase activity of HDAC3 and can alter its subcellular localization. Positively regulates the beta-catenin pathway (canonical Wnt signaling pathway) and is required for MCC-mediated repression of the beta-catenin pathway. Represses ligand-dependent transcriptional activation function of NR1H2 and NR1H3 and inhibits the interaction of SIRT1 with NR1H3. Plays an important role in tumor suppression through p53/TP53 regulation; stabilizes p53/TP53 by affecting its interaction with ubiquitin ligase MDM2. Represses the transcriptional activator activity of BRCA1. Inhibits SIRT1 in a CHEK2 and PSEM3-dependent manner and inhibits the activity of CHEK2 in vitro. The sequence is that of Cell cycle and apoptosis regulator protein 2 (CCAR2) from Pongo abelii (Sumatran orangutan).